We begin with the raw amino-acid sequence, 792 residues long: Ribonucleoside-diphosphate reductase large subunit (792 aa).

The 92-residue stretch at 1-92 (MHVIKRDGRQ…VSNLHKETKK (92 aa)) folds into the ATP-cone domain. ATP contacts are provided by residues 5-6 (KR), 11-17 (ERVMFDK), T53, and D57. K17 is subject to N6-acetyllysine. Residues S202 and S217 each coordinate GDP. C218 and C444 are oxidised to a cystine. DTTP is bound by residues 226-228 (DSI), K243, R256, and 263-264 (AG). The residue at position 376 (K376) is an N6-acetyllysine. N427 is a GDP binding site. N427 serves as the catalytic Proton acceptor. The Cysteine radical intermediate role is filled by C429. GDP-binding positions include E431 and 604-607 (TAST). The Proton acceptor role is filled by E431. T751 carries the post-translational modification Phosphothreonine.

The protein belongs to the ribonucleoside diphosphate reductase large chain family. Heterodimer of a large and a small subunit. Interacts with RRM2B. Interacts with AHCYL1 which inhibits its activity.

The protein localises to the cytoplasm. The enzyme catalyses a 2'-deoxyribonucleoside 5'-diphosphate + [thioredoxin]-disulfide + H2O = a ribonucleoside 5'-diphosphate + [thioredoxin]-dithiol. With respect to regulation, under complex allosteric control mediated by deoxynucleoside triphosphates and ATP binding to separate specificity and activation sites on the M1 subunit. The type of nucleotide bound at the specificity site determines substrate preference. It seems probable that ATP makes the enzyme reduce CDP and UDP, dGTP favors ADP reduction and dTTP favors GDP reduction. Stimulated by ATP and inhibited by dATP binding to the activity site, the dATP inhibition is mediated by AHCYL1 which stabilizes dATP in the site. Its function is as follows. Provides the precursors necessary for DNA synthesis. Catalyzes the biosynthesis of deoxyribonucleotides from the corresponding ribonucleotides. The chain is Ribonucleoside-diphosphate reductase large subunit (Rrm1) from Mus musculus (Mouse).